Reading from the N-terminus, the 501-residue chain is ATP synthase subunit alpha (501 aa).

169–176 (GDRQTGKT) contributes to the ATP binding site.

Belongs to the ATPase alpha/beta chains family. In terms of assembly, F-type ATPases have 2 components, CF(1) - the catalytic core - and CF(0) - the membrane proton channel. CF(1) has five subunits: alpha(3), beta(3), gamma(1), delta(1), epsilon(1). CF(0) has three main subunits: a(1), b(2) and c(9-12). The alpha and beta chains form an alternating ring which encloses part of the gamma chain. CF(1) is attached to CF(0) by a central stalk formed by the gamma and epsilon chains, while a peripheral stalk is formed by the delta and b chains.

Its subcellular location is the cell inner membrane. The enzyme catalyses ATP + H2O + 4 H(+)(in) = ADP + phosphate + 5 H(+)(out). Produces ATP from ADP in the presence of a proton gradient across the membrane. The alpha chain is a regulatory subunit. The sequence is that of ATP synthase subunit alpha from Campylobacter jejuni subsp. jejuni serotype O:6 (strain 81116 / NCTC 11828).